The chain runs to 275 residues: Phosphonoacetaldehyde hydrolase (275 aa).

D15 functions as the Nucleophile in the catalytic mechanism. D15 and A17 together coordinate Mg(2+). The active-site Schiff-base intermediate with substrate is K56. D189 is a binding site for Mg(2+).

Belongs to the HAD-like hydrolase superfamily. PhnX family. As to quaternary structure, homodimer. Requires Mg(2+) as cofactor.

The catalysed reaction is phosphonoacetaldehyde + H2O = acetaldehyde + phosphate + H(+). Functionally, involved in phosphonate degradation. The protein is Phosphonoacetaldehyde hydrolase of Pseudomonas aeruginosa (strain UCBPP-PA14).